A 317-amino-acid chain; its full sequence is Melanocyte-stimulating hormone receptor (317 aa).

The segment covering 1–20 (MPVQGSQRSLLGAVNSTPTA) has biased composition (polar residues). A disordered region spans residues 1 to 23 (MPVQGSQRSLLGAVNSTPTATPH). Residues 1-37 (MPVQGSQRSLLGAVNSTPTATPHLRPAANQTGPQCLE) are Extracellular-facing. The N-linked (GlcNAc...) asparagine glycan is linked to Asn-29. A helical membrane pass occupies residues 38-63 (VSIPDGLFLCLGLVSLVENTLVVAAI). The Cytoplasmic portion of the chain corresponds to 64 to 72 (AKNRNLHSP). A helical membrane pass occupies residues 73–93 (MYCFICCLALSDLLVSVSSVL). Residues 94 to 118 (ETAVLLLLGAGALAAQATVVQQLGN) are Extracellular-facing. The helical transmembrane segment at 119–140 (VIDVLLCSSMVSSLFFLGAIAM) threads the bilayer. Residues 141-163 (DRYISIFYALRYHSIVTLARARR) lie on the Cytoplasmic side of the membrane. Residues 164–183 (AIAAIWAASILSSTLFIAYC) form a helical membrane-spanning segment. The Extracellular portion of the chain corresponds to 184 to 191 (DRTAALLC). A helical membrane pass occupies residues 192–211 (LVVFFLAMLVLMAVLYVHML). Residues 212–240 (TQARQHAQGIARLHKRQRPVQQGWGLKGA) lie on the Cytoplasmic side of the membrane. The helical transmembrane segment at 241–266 (ATLTILLGVFFLCWGPFFLHLTLIAV) threads the bilayer. Topologically, residues 267 to 279 (CPQHPTCSCIFKN) are extracellular. The chain crosses the membrane as a helical span at residues 280–300 (FRLFLALIVCNAIVDPLIYAF). Residues 301–317 (RSQELRKTLKEVLLFFW) lie on the Cytoplasmic side of the membrane.

The protein belongs to the G-protein coupled receptor 1 family. As to quaternary structure, interacts with MGRN1, but does not undergo MGRN1-mediated ubiquitination; this interaction competes with GNAS-binding and thus inhibits agonist-induced cAMP production. Interacts with OPN3; the interaction results in a decrease in MC1R-mediated cAMP signaling and ultimately a decrease in melanin production in melanocytes.

Its subcellular location is the cell membrane. Receptor for MSH (alpha, beta and gamma) and ACTH. The activity of this receptor is mediated by G proteins which activate adenylate cyclase. Mediates melanogenesis, the production of eumelanin (black/brown) and phaeomelanin (red/yellow), via regulation of cAMP signaling in melanocytes. The polypeptide is Melanocyte-stimulating hormone receptor (MC1R) (Lemur catta (Ring-tailed lemur)).